Consider the following 147-residue polypeptide: uncharacterized protein (147 aa).

An HTH LytTR-type domain is found at 44–147 (LVGYIDKEIH…LKSIKERLSI (104 aa)).

It is found in the cytoplasm. This is an uncharacterized protein from Staphylococcus aureus (strain MRSA252).